The primary structure comprises 310 residues: Cytochrome f (310 aa).

Residues 1 to 26 form the signal peptide; sequence MNIKLTLLVLISIINLMIIQPIQTLA. Heme is bound by residues F27, C47, C50, and H51. Residues 276-296 traverse the membrane as a helical segment; the sequence is IKGMIVFFFTVTIAQIFFVLK.

Belongs to the cytochrome f family. The 4 large subunits of the cytochrome b6-f complex are cytochrome b6, subunit IV (17 kDa polypeptide, petD), cytochrome f and the Rieske protein, while the 4 small subunits are PetG, PetL, PetM and PetN. The complex functions as a dimer. Heme serves as cofactor.

The protein resides in the plastid. The protein localises to the chloroplast thylakoid membrane. Its function is as follows. Component of the cytochrome b6-f complex, which mediates electron transfer between photosystem II (PSII) and photosystem I (PSI), cyclic electron flow around PSI, and state transitions. This Gracilaria tenuistipitata var. liui (Red alga) protein is Cytochrome f.